A 280-amino-acid polypeptide reads, in one-letter code: Formyltetrahydrofolate deformylase (280 aa).

An ACT domain is found at 8 to 86; sequence VLRTICPDQK…RELNPAGRRR (79 aa). Asp-225 is an active-site residue.

It belongs to the PurU family.

It carries out the reaction (6R)-10-formyltetrahydrofolate + H2O = (6S)-5,6,7,8-tetrahydrofolate + formate + H(+). Its pathway is purine metabolism; IMP biosynthesis via de novo pathway; formate from 10-formyl-5,6,7,8-tetrahydrofolate: step 1/1. Catalyzes the hydrolysis of 10-formyltetrahydrofolate (formyl-FH4) to formate and tetrahydrofolate (FH4). The chain is Formyltetrahydrofolate deformylase from Escherichia coli O6:H1 (strain CFT073 / ATCC 700928 / UPEC).